The chain runs to 798 residues: Protocadherin beta-10 (798 aa).

The signal sequence occupies residues 1–26 (MAVRELCFSRQRQVLFLFLFWGVSLA). Topologically, residues 27–690 (GSGFGRYSVT…AQADLLTVYL (664 aa)) are extracellular. Cadherin domains lie at 35–133 (VTEE…APVF), 138–242 (TVLK…APQF), 247–347 (YETQ…PPEL), 352–451 (FSNS…APAF), and 456–561 (YTLF…SPFV). The N-linked (GlcNAc...) asparagine glycan is linked to asparagine 169. Asparagine 418 and asparagine 436 each carry an N-linked (GlcNAc...) asparagine glycan. N-linked (GlcNAc...) asparagine glycosylation occurs at asparagine 567. Residues 568 to 671 (GSAPCTELVP…LVDGFSQPYL (104 aa)) form the Cadherin 6 domain. Residues 691-711 (VVALASVSSLFLFSVLLFVAV) form a helical membrane-spanning segment. Residues 712-798 (RLCRRSRAAS…FRNSFGFNIQ (87 aa)) are Cytoplasmic-facing.

It is found in the cell membrane. In terms of biological role, potential calcium-dependent cell-adhesion protein. May be involved in the establishment and maintenance of specific neuronal connections in the brain. The chain is Protocadherin beta-10 (PCDHB10) from Pan troglodytes (Chimpanzee).